A 488-amino-acid chain; its full sequence is MQYRDLRDFIRILEQRGELKRITAEVDPHLEMTEICDRTLRREGPALLFENPRGYSIPVLGNLFGTPGRVALGMGAESVESLREIGKLLAFLKEPEPPKGLRDAWSKLPIFKQVMNMGPKEVSSASCQEVIIEGDDVDLYQYPIQTCWPGDAGPLVTWPLVITRGPNKARQNLGIYRQQLIGRNKLIMRWLSHRGGALDYREWREAHPMEPFPVAVALGADPATILGAVTPVPDTLSEYAFAGLLRGNKTEVVRCIGSDLQAPASAEIVLEGVIHPGEMAPEGPFGDHTGYYNEVDRFPVFTVERITQRKKPIYHSTYTGRPPDEPAVLGVALNEVFVPILQKQFPEIVDFYLPPEGCSYRMAVVTMKKQYPGHAKRVMMGVWSFLRQFMYTKFVIVTDDDVNARDWKDVIWAITTRMDPARDTVMVENTPIDYLDFASPVSGLGSKMGLDATNKWPGETQREWGRTIQMDADVKARVDDLWSQLGID.

Asparagine 172 serves as a coordination point for Mn(2+). Residues isoleucine 175 to arginine 177, arginine 189 to leucine 191, and arginine 194 to glycine 195 each bind prenylated FMN. Position 238 (glutamate 238) interacts with Mn(2+). Aspartate 287 functions as the Proton donor in the catalytic mechanism.

The protein belongs to the UbiD family. As to quaternary structure, homohexamer. Requires prenylated FMN as cofactor. It depends on Mn(2+) as a cofactor.

It localises to the cell membrane. The enzyme catalyses a 4-hydroxy-3-(all-trans-polyprenyl)benzoate + H(+) = a 2-(all-trans-polyprenyl)phenol + CO2. The protein operates within cofactor biosynthesis; ubiquinone biosynthesis. Its function is as follows. Catalyzes the decarboxylation of 3-octaprenyl-4-hydroxy benzoate to 2-octaprenylphenol, an intermediate step in ubiquinone biosynthesis. This is 3-octaprenyl-4-hydroxybenzoate carboxy-lyase from Hahella chejuensis (strain KCTC 2396).